The primary structure comprises 521 residues: Protein PLM2 (521 aa).

A disordered region spans residues 1–63 (MSHLFPPSSP…SIGRQSSPVK (63 aa)). Over residues 51 to 63 (PSSSIGRQSSPVK) the composition is skewed to polar residues. The 55-residue stretch at 102–156 (LAIGRKKSVCNIILPCRKNISRQHAFISYAADRNEIKLECNGTNGLSVHLPYSMQ) folds into the FHA domain. A phosphoserine mark is found at S281, S295, S302, and S384.

This sequence belongs to the PLM2/TOS4 family. Post-translationally, phosphorylated by CDC28.

It is found in the nucleus. Its function is as follows. Binds to the promoters of genes with functions important for the G1/S (start) transition; primarily genes involved in DNA synthesis and repair, chromosome segregation, nuclear division and transcription. The chain is Protein PLM2 (PLM2) from Saccharomyces cerevisiae (strain ATCC 204508 / S288c) (Baker's yeast).